A 446-amino-acid polypeptide reads, in one-letter code: MAQKLFIKTYGCQMNEYDSSRMADLLGESHSVELTDNPDEADILLLNTCSIREKAQEKVFHQLGRWKTLKEKNPNLLIGVGGCVASQEGDAIRDRAPYVDMVFGPQTLHRLPEMVNSVAHQKIPMVDVTFPEIEKFDRLPMPSSEGASAFVSIMEGCSKYCTFCVVPYTRGEEVSRPVDDVIAEIAHLAGQGVREVNLLGQNVNAYRGLTHDGDYMDLAELITYVASVDGIDRIRYTTSHPVEFSDSLIDVYASVPKLVSHLHLPVQSGSDRILNLMKRGHTVAEYTDKLRRLQEIRPDISLSSDFIVGFPGETDADFEETMNLINEIGFDHSFSFVYSARPGTPAANLEDNVSEEAKKQRLAILQQRILQFAQDISRKMVGSTQRILVTGVSKKDPGELQGRTENNRVVNFRSDSHDIIGRFVDVTITAALPNSLRGERVDSLDY.

One can recognise an MTTase N-terminal domain in the interval 3 to 120 (QKLFIKTYGC…LPEMVNSVAH (118 aa)). Residues C12, C49, C83, C157, C161, and C164 each contribute to the [4Fe-4S] cluster site. Residues 143-375 (SSEGASAFVS…QQRILQFAQD (233 aa)) form the Radical SAM core domain. A TRAM domain is found at 378–442 (RKMVGSTQRI…PNSLRGERVD (65 aa)).

It belongs to the methylthiotransferase family. MiaB subfamily. In terms of assembly, monomer. [4Fe-4S] cluster is required as a cofactor.

It localises to the cytoplasm. The enzyme catalyses N(6)-dimethylallyladenosine(37) in tRNA + (sulfur carrier)-SH + AH2 + 2 S-adenosyl-L-methionine = 2-methylsulfanyl-N(6)-dimethylallyladenosine(37) in tRNA + (sulfur carrier)-H + 5'-deoxyadenosine + L-methionine + A + S-adenosyl-L-homocysteine + 2 H(+). Functionally, catalyzes the methylthiolation of N6-(dimethylallyl)adenosine (i(6)A), leading to the formation of 2-methylthio-N6-(dimethylallyl)adenosine (ms(2)i(6)A) at position 37 in tRNAs that read codons beginning with uridine. This chain is tRNA-2-methylthio-N(6)-dimethylallyladenosine synthase, found in Hahella chejuensis (strain KCTC 2396).